Here is an 878-residue protein sequence, read N- to C-terminus: Leucine--tRNA ligase (878 aa).

The short motif at 56–66 (PYPSGKLHMGH) is the 'HIGH' region element. The short motif at 630 to 634 (KMSKS) is the 'KMSKS' region element. Position 633 (Lys-633) interacts with ATP.

The protein belongs to the class-I aminoacyl-tRNA synthetase family.

Its subcellular location is the cytoplasm. The enzyme catalyses tRNA(Leu) + L-leucine + ATP = L-leucyl-tRNA(Leu) + AMP + diphosphate. This is Leucine--tRNA ligase from Prochlorococcus marinus (strain MIT 9303).